The sequence spans 331 residues: Ferredoxin--NADP reductase (331 aa).

The FAD site is built by Thr14, Glu33, Gln41, Tyr46, Val86, Phe120, Asp284, and Ser327.

Belongs to the ferredoxin--NADP reductase type 2 family. Homodimer. It depends on FAD as a cofactor.

The catalysed reaction is 2 reduced [2Fe-2S]-[ferredoxin] + NADP(+) + H(+) = 2 oxidized [2Fe-2S]-[ferredoxin] + NADPH. This chain is Ferredoxin--NADP reductase, found in Picrophilus torridus (strain ATCC 700027 / DSM 9790 / JCM 10055 / NBRC 100828 / KAW 2/3).